Here is a 602-residue protein sequence, read N- to C-terminus: General amino-acid permease GAP1 (602 aa).

Over 1-95 the chain is Cytoplasmic; sequence MSNTSSYEKN…LKHHLKNRHL (95 aa). A Glycyl lysine isopeptide (Lys-Gly) (interchain with G-Cter in ubiquitin) cross-link involves residue Lys-76. Residues 96–116 traverse the membrane as a helical segment; that stretch reads QMIAIGGAIGTGLLVGSGTAL. The Extracellular segment spans residues 117–121; that stretch reads RTGGP. The helical transmembrane segment at 122 to 142 threads the bilayer; the sequence is ASLLIGWGSTGTMIYAMVMAL. Topologically, residues 143 to 165 are cytoplasmic; that stretch reads GELAVIFPISGGFTTYATRFIDE. Residues 166–185 form a helical membrane-spanning segment; sequence SFGYANNFNYMLQWLVVLPL. Topologically, residues 186–204 are extracellular; that stretch reads EIVSASITVNFWGTDPKYR. Residues 205 to 224 traverse the membrane as a helical segment; that stretch reads DGFVALFWLAIVIINMFGVK. The Cytoplasmic portion of the chain corresponds to 225-237; that stretch reads GYGEAEFVFSFIK. The helical transmembrane segment at 238-256 threads the bilayer; it reads VITVVGFIILGIILNCGGG. Residues 257-280 lie on the Extracellular side of the membrane; the sequence is PTGGYIGGKYWHDPGAFAGDTPGA. The chain crosses the membrane as a helical span at residues 281-298; the sequence is KFKGVCSVFVTAAFSFAG. Residues 299-321 lie on the Cytoplasmic side of the membrane; the sequence is SELVGLAASESVEPRKSVPKAAK. A helical membrane pass occupies residues 322–342; it reads QVFWRITLFYILSLLMIGLLV. At 343–376 the chain is on the extracellular side; sequence PYNDKSLIGASSVDAAASPFVIAIKTHGIKGLPS. A helical membrane pass occupies residues 377–396; sequence VVNVVILIAVLSVGNSAIYA. Residues 397 to 421 lie on the Cytoplasmic side of the membrane; sequence CSRTMVALAEQRFLPEIFSYVDRKG. A helical membrane pass occupies residues 422–442; it reads RPLVGIAVTSAFGLIAFVAAS. The Extracellular segment spans residues 443-451; that stretch reads KKEGEVFNW. A helical transmembrane segment spans residues 452–472; the sequence is LLALSGLSSLFTWGGICICHI. Over 473–491 the chain is Cytoplasmic; that stretch reads RFRKALAAQGRGLDELSFK. Residues 492–510 traverse the membrane as a helical segment; sequence SPTGVWGSYWGLFMVIIMF. Over 511–529 the chain is Extracellular; the sequence is IAQFYVAVFPVGDSPSAEG. The chain crosses the membrane as a helical span at residues 530–548; the sequence is FFEAYLSFPLVMVMYIGHK. Over 549–602 the chain is Cytoplasmic; sequence IYKRNWKLFIPAEKMDIDTGRREVDLDLLKQEIAEEKAIMATKPRWYRIWNFWC.

This sequence belongs to the amino acid-polyamine-organocation (APC) superfamily. YAT (TC 2.A.3.10) family. Active permease is phosphorylated. The addition of glutamine causes rapid dephosphorylation and inactivation of the permease. Post-translationally, ubiquitination by RSP5 and the RSP5-associated proteins BUL1 and BUL2, leads the addition of poly-ubiquitin chains being specifically formed by linkage through the lysine 63 residue of ubiquitin and mediates ammonium-induced endocytosis and degradation in the vacuole.

The protein localises to the cell membrane. The protein resides in the endoplasmic reticulum membrane. General amino-acid permease involved in the uptake of all the naturally occurring L-amino-acids, related compounds such as ornithine and citrulline, some D-amino acids, toxic amino acid analogs such as azetidine-2-carboxylate, and the polyamines putrescine and spermidine. Senses its transport substrates to set an appropriate level of transporter activity at the cell surface. Required for FLO11 expression and invasive growth. The sequence is that of General amino-acid permease GAP1 from Saccharomyces cerevisiae (strain ATCC 204508 / S288c) (Baker's yeast).